A 669-amino-acid polypeptide reads, in one-letter code: DNA ligase (669 aa).

NAD(+) contacts are provided by residues 33–37 (DVTYD), 82–83 (SL), and Glu115. Residue Lys117 is the N6-AMP-lysine intermediate of the active site. NAD(+) contacts are provided by Arg138, Glu172, Lys286, and Lys310. The Zn(2+) site is built by Cys401, Cys404, Cys417, and Cys422. The BRCT domain maps to 589–669 (VDSSFLFGKK…DIKNLVNLDD (81 aa)).

The protein belongs to the NAD-dependent DNA ligase family. LigA subfamily. The cofactor is Mg(2+). Mn(2+) is required as a cofactor.

The catalysed reaction is NAD(+) + (deoxyribonucleotide)n-3'-hydroxyl + 5'-phospho-(deoxyribonucleotide)m = (deoxyribonucleotide)n+m + AMP + beta-nicotinamide D-nucleotide.. In terms of biological role, DNA ligase that catalyzes the formation of phosphodiester linkages between 5'-phosphoryl and 3'-hydroxyl groups in double-stranded DNA using NAD as a coenzyme and as the energy source for the reaction. It is essential for DNA replication and repair of damaged DNA. This is DNA ligase from Borrelia duttonii (strain Ly).